The chain runs to 349 residues: Phosphate acyltransferase (349 aa).

It belongs to the PlsX family. In terms of assembly, homodimer. Probably interacts with PlsY.

It is found in the cytoplasm. It carries out the reaction a fatty acyl-[ACP] + phosphate = an acyl phosphate + holo-[ACP]. It participates in lipid metabolism; phospholipid metabolism. Its function is as follows. Catalyzes the reversible formation of acyl-phosphate (acyl-PO(4)) from acyl-[acyl-carrier-protein] (acyl-ACP). This enzyme utilizes acyl-ACP as fatty acyl donor, but not acyl-CoA. In Rhodospirillum rubrum (strain ATCC 11170 / ATH 1.1.1 / DSM 467 / LMG 4362 / NCIMB 8255 / S1), this protein is Phosphate acyltransferase.